A 506-amino-acid chain; its full sequence is Cobyric acid synthase (506 aa).

Positions 254–453 (DLDIAVIRLP…IHGIFESDSF (200 aa)) constitute a GATase cobBQ-type domain. The active-site Nucleophile is C334. H445 is a catalytic residue.

The protein belongs to the CobB/CobQ family. CobQ subfamily.

It participates in cofactor biosynthesis; adenosylcobalamin biosynthesis. Catalyzes amidations at positions B, D, E, and G on adenosylcobyrinic A,C-diamide. NH(2) groups are provided by glutamine, and one molecule of ATP is hydrogenolyzed for each amidation. The protein is Cobyric acid synthase of Dehalococcoides mccartyi (strain ATCC BAA-2266 / KCTC 15142 / 195) (Dehalococcoides ethenogenes (strain 195)).